A 178-amino-acid polypeptide reads, in one-letter code: Large ribosomal subunit protein uL6 (178 aa).

It belongs to the universal ribosomal protein uL6 family. Part of the 50S ribosomal subunit.

In terms of biological role, this protein binds to the 23S rRNA, and is important in its secondary structure. It is located near the subunit interface in the base of the L7/L12 stalk, and near the tRNA binding site of the peptidyltransferase center. This Staphylococcus saprophyticus subsp. saprophyticus (strain ATCC 15305 / DSM 20229 / NCIMB 8711 / NCTC 7292 / S-41) protein is Large ribosomal subunit protein uL6.